A 277-amino-acid polypeptide reads, in one-letter code: Phosphatidylglycerol--prolipoprotein diacylglyceryl transferase (277 aa).

Helical transmembrane passes span 21-41 (LAVR…LWLA), 60-80 (LLFA…VLFY), 95-115 (VWTG…AMLW), 124-144 (FFTI…AGRL), 176-196 (SQLY…NWFI), 203-223 (GTVS…VEYV), and 239-259 (MGQI…LWAF). Residue R143 coordinates a 1,2-diacyl-sn-glycero-3-phospho-(1'-sn-glycerol).

The protein belongs to the Lgt family.

Its subcellular location is the cell inner membrane. The enzyme catalyses L-cysteinyl-[prolipoprotein] + a 1,2-diacyl-sn-glycero-3-phospho-(1'-sn-glycerol) = an S-1,2-diacyl-sn-glyceryl-L-cysteinyl-[prolipoprotein] + sn-glycerol 1-phosphate + H(+). Its pathway is protein modification; lipoprotein biosynthesis (diacylglyceryl transfer). Its function is as follows. Catalyzes the transfer of the diacylglyceryl group from phosphatidylglycerol to the sulfhydryl group of the N-terminal cysteine of a prolipoprotein, the first step in the formation of mature lipoproteins. This is Phosphatidylglycerol--prolipoprotein diacylglyceryl transferase from Aliivibrio fischeri (strain ATCC 700601 / ES114) (Vibrio fischeri).